The primary structure comprises 580 residues: FAD-dependent monooxygenase DEP4 (580 aa).

47–50 (VWSK) provides a ligand contact to FAD. NADP(+) is bound at residue 58–60 (FAQ). Residue Val-112 coordinates FAD. Residues 186-205 (VGRSKSSYDAVYHLLCAGKK), 222-223 (AP), and 354-355 (DI) contribute to the NADP(+) site. Met-473 contributes to the FAD binding site.

It belongs to the FAD-binding monooxygenase family. Requires FAD as cofactor.

Its pathway is polyketide biosynthesis. Part of the gene cluster that mediates the biosynthesis of depudecin, a highly oxidized eleven-carbon linear polyketide that acts as a histone deacetylase (HDAC) inhibitor and makes a small contribution to pathogenesis. The reducing polyketide synthase DEP5 is the central enzyme in depudecin biosynthesis by yielding the backbone polyketide chain. The monooxygenases DEP2 and DEP4, as well as the uncharacterized protein DEP1, then act as tailoring enzymes to modify the intermediate polyketide chain into depudecin. The polypeptide is FAD-dependent monooxygenase DEP4 (Fusarium langsethiae).